The following is a 57-amino-acid chain: UPF0391 membrane protein RPA3029 (57 aa).

A run of 2 helical transmembrane segments spans residues 6–26 (WALIFLVVSIIAGIFGFTGIS) and 35–55 (ILFYVFVVIFVVLLILGFTIF).

The protein belongs to the UPF0391 family.

The protein resides in the cell membrane. This chain is UPF0391 membrane protein RPA3029, found in Rhodopseudomonas palustris (strain ATCC BAA-98 / CGA009).